We begin with the raw amino-acid sequence, 87 residues long: Phosphocarrier protein HPr (87 aa).

In terms of domain architecture, HPr spans 1–87 (MEKIFKVTSD…ETMKNEGLGE (87 aa)). His-14 serves as the catalytic Pros-phosphohistidine intermediate; alternate. His-14 carries the post-translational modification Tele-phosphohistidine; alternate. A Phosphoserine; by HPrK/P modification is found at Ser-45.

This sequence belongs to the HPr family. The form phosphorylated at the tele nitrogen (N(epsilon)2), instead of the expected pros nitrogen (N(delta)1), of His-14 is not able to transfer its phosphoryl group to the B.subtilis EIIA-Glc domain. This form may be inactive in PTS-catalyzed sugar transport or target an as yet unknown acceptor molecule in an alternative metabolic process.

Its subcellular location is the cytoplasm. With respect to regulation, phosphorylation on Ser-45 inhibits the phosphoryl transfer from enzyme I to HPr. In terms of biological role, general (non sugar-specific) component of the phosphoenolpyruvate-dependent sugar phosphotransferase system (sugar PTS). This major carbohydrate active-transport system catalyzes the phosphorylation of incoming sugar substrates concomitantly with their translocation across the cell membrane. The phosphoryl group from phosphoenolpyruvate (PEP) is transferred to the phosphoryl carrier protein HPr by enzyme I. Phospho-HPr then transfers it to the PTS EIIA domain. Its function is as follows. P-Ser-HPr interacts with the catabolite control protein A (CcpA), forming a complex that binds to DNA at the catabolite response elements cre, operator sites preceding a large number of catabolite-regulated genes. Thus, P-Ser-HPr is a corepressor in carbon catabolite repression (CCR), a mechanism that allows bacteria to coordinate and optimize the utilization of available carbon sources. P-Ser-HPr mediates glucose catabolite repression of cry4A toxin expression. This chain is Phosphocarrier protein HPr (ptsH), found in Bacillus thuringiensis subsp. israelensis.